Here is a 284-residue protein sequence, read N- to C-terminus: MATVTAALVKELRERTAAGMMDCKKALVEADGDIELAIDNMRKSGAAKAAKKSGNIAAEGTIIIKEVDGIAAILEVNCQTDFVAKDASFLAFANEVADAALAGRVEVAELQAAFEEKRIALVTKIGENISIRRVEFIEGAQIGSYRHGDRIGVVVVVVASDADQETIKQVAMHVAASKPEFVTPEDVPADVVAKEKQIQIDIAIQSGKPAEIAEKMVVGRMKKFTGEVSLTGQAFIMDPAQTVGQMLKAKGATVTNFIRFEVGEGIEKAKEMSFAEEVAAVQKG.

Residues 80–83 (TDFV) are involved in Mg(2+) ion dislocation from EF-Tu.

The protein belongs to the EF-Ts family.

The protein localises to the cytoplasm. Functionally, associates with the EF-Tu.GDP complex and induces the exchange of GDP to GTP. It remains bound to the aminoacyl-tRNA.EF-Tu.GTP complex up to the GTP hydrolysis stage on the ribosome. This is Elongation factor Ts from Photobacterium profundum (strain SS9).